Consider the following 929-residue polypeptide: Band 3 anion transport protein (929 aa).

Methionine 1 carries the post-translational modification N-acetylmethionine. At 1–422 the chain is on the cytoplasmic side; sequence MGDMRDHEEV…LSDITDALSP (422 aa). Serine 18 carries the phosphoserine modification. Phosphotyrosine is present on residues tyrosine 31 and tyrosine 56. Residues 46–67 are disordered; it reads ALPTEQTATDYVPSSTSTPHPS. The span at 58–67 shows a compositional bias: low complexity; that stretch reads PSSTSTPHPS. Residues 69–303 form a globular region; sequence GQVYVELQEL…LGRAAATLMT (235 aa). The interaction with ANK1 stretch occupies residues 190–199; it reads AVLTRSGGAS. Phosphoserine is present on residues serine 199, serine 222, and serine 363. Residues 317-370 are dimerization arm; it reads REELLRSLESFLDCSLVLPPTDAPSEKALLNLVPVQKELLRRRYLPSPAKPDPN. Positions 366–389 are disordered; the sequence is KPDPNLYNTLDLNGGKGGPGDEDD. Tyrosine 372 carries the post-translational modification Phosphotyrosine. Residue threonine 374 is modified to Phosphothreonine. A helical transmembrane segment spans residues 423-446; sequence QVLAAVIFIYFAALSPAVTFGGLL. Over 447–454 the chain is Extracellular; that stretch reads GEKTRNLM. A helical transmembrane segment spans residues 455–475; it reads GVSELLISTAVQGILFALLGA. The Cytoplasmic segment spans residues 476 to 478; it reads QPL. Residues 479–495 form a discontinuously helical membrane-spanning segment; it reads LVLGFSGPLLVFEEAFF. At 496–504 the chain is on the extracellular side; the sequence is SFCESNNLE. A helical membrane pass occupies residues 505 to 525; sequence YIVGRAWIGFWLILLVMLVVA. The Cytoplasmic portion of the chain corresponds to 526–537; the sequence is FEGSFLVQYISR. Residues 538–560 form a helical membrane-spanning segment; that stretch reads YTQEIFSFLISLIFIYETFSKLI. Residues 561–588 lie on the Extracellular side of the membrane; the sequence is KIFQDYPLQQTYAPVVMKPKPQGPVPNT. The helical transmembrane segment at 589–609 threads the bilayer; that stretch reads ALFSLVLMAGTFLLAMTLRKF. The Cytoplasmic portion of the chain corresponds to 610-620; sequence KNSTYFPGKLR. A helical transmembrane segment spans residues 621-641; sequence RVIGDFGVPISILIMVLVDSF. Topologically, residues 642-681 are extracellular; the sequence is IKGTYTQKLSVPDGLKVSNSSARGWVIHPLGLYRLFPTWM. N-linked (GlcNAc...) asparagine glycosylation is present at asparagine 660. The chain crosses the membrane as a helical span at residues 682–702; that stretch reads MFASVLPALLVFILIFLESQI. Over 703–718 the chain is Cytoplasmic; that stretch reads TTLIVSKPERKMIKGS. The chain crosses the membrane as a helical span at residues 719 to 737; it reads GFHLDLLLVVGMGGVAALF. A discontinuously helical membrane pass occupies residues 738-755; sequence GMPWLSATTVRSVTHANA. Over 756–778 the chain is Cytoplasmic; it reads LTVMGKASGPGAAAQIQEVKEQR. 2 helical membrane-spanning segments follow: residues 779–799 and 800–818; these read ISGLLVSVLVGLSILMEPILS and RIPLAVLFGIFLYMGVTSL. The Cytoplasmic portion of the chain corresponds to 819–856; that stretch reads SGIQLFDRILLLFKPPKYHPDVPFVKRVKTWRMHLFTG. Residues 857–887 constitute an intramembrane region (discontinuously helical); sequence IQIICLAVLWVVKSTPASLALPFVLILTVPL. Residue cysteine 861 is the site of S-palmitoyl cysteine attachment. Residues 888 to 929 lie on the Cytoplasmic side of the membrane; sequence RRLILPLIFRELELQCLDGDDAKVTFDEENGLDEYDEVPMPV. Tyrosine 922 is subject to Phosphotyrosine.

It belongs to the anion exchanger (TC 2.A.31) family. As to quaternary structure, a dimer in solution, but in its membrane environment, it exists primarily as a mixture of dimers and tetramers and spans the membrane asymmetrically. Component of the ankyrin-1 complex in the erythrocyte, composed of ANK1, RHCE, RHAG, SLC4A1, EPB42, GYPA, GYPB and AQP1. Interacts with STOM; this interaction positively regulates SLC4A1 activity. Interacts with GYPA; a GYPA monomer is bound at each end of the SLC4A1 dimer forming a heterotetramer. Three SLC4A1 dimers (Band 3-I, Band 3-II and Band 3-III) participates in the ankyrin-1 complex. Interacts (via the cytoplasmic domain) with EPB42; this interaction is mediated by the SLC4A1 Band 3-I dimer. Interacts (via the cytoplasmic domain) directly with ANK1; this interaction is mediated by the SLC4A1 Band 3-II and Band 3-III dimers. In terms of assembly, interacts with TMEM139. In terms of tissue distribution, detected in erythrocytes (at protein level).

It is found in the cell membrane. The protein resides in the basolateral cell membrane. The catalysed reaction is hydrogencarbonate(in) + chloride(out) = hydrogencarbonate(out) + chloride(in). Functionally, functions both as a transporter that mediates electroneutral anion exchange across the cell membrane and as a structural protein. Component of the ankyrin-1 complex of the erythrocyte membrane; required for normal flexibility and stability of the erythrocyte membrane and for normal erythrocyte shape via the interactions of its cytoplasmic domain with cytoskeletal proteins, glycolytic enzymes, and hemoglobin. Functions as a transporter that mediates the 1:1 exchange of inorganic anions across the erythrocyte membrane. Mediates chloride-bicarbonate exchange in the kidney, and is required for normal acidification of the urine. This chain is Band 3 anion transport protein, found in Mus musculus (Mouse).